The chain runs to 465 residues: CCA-adding enzyme (465 aa).

ATP contacts are provided by S63 and K66. S63 and K66 together coordinate CTP. Mg(2+) contacts are provided by E75, D77, and D127. 3 residues coordinate ATP: H149, K171, and Y180. Residues H149, K171, and Y180 each contribute to the CTP site.

Belongs to the tRNA nucleotidyltransferase/poly(A) polymerase family. Archaeal CCA-adding enzyme subfamily. In terms of assembly, homodimer. Requires Mg(2+) as cofactor.

It catalyses the reaction a tRNA precursor + 2 CTP + ATP = a tRNA with a 3' CCA end + 3 diphosphate. The catalysed reaction is a tRNA with a 3' CCA end + 2 CTP + ATP = a tRNA with a 3' CCACCA end + 3 diphosphate. Catalyzes the addition and repair of the essential 3'-terminal CCA sequence in tRNAs without using a nucleic acid template. Adds these three nucleotides in the order of C, C, and A to the tRNA nucleotide-73, using CTP and ATP as substrates and producing inorganic pyrophosphate. tRNA 3'-terminal CCA addition is required both for tRNA processing and repair. Also involved in tRNA surveillance by mediating tandem CCA addition to generate a CCACCA at the 3' terminus of unstable tRNAs. While stable tRNAs receive only 3'-terminal CCA, unstable tRNAs are marked with CCACCA and rapidly degraded. The chain is CCA-adding enzyme from Aeropyrum pernix (strain ATCC 700893 / DSM 11879 / JCM 9820 / NBRC 100138 / K1).